We begin with the raw amino-acid sequence, 284 residues long: Pseudouridine-5'-phosphate glycosidase (284 aa).

Glu-17 functions as the Proton donor in the catalytic mechanism. Lys-77 and Val-97 together coordinate substrate. Asp-126 contacts Mn(2+). A substrate-binding site is contributed by 128 to 130; that stretch reads SQD. Residue Lys-147 is the Nucleophile of the active site.

It belongs to the pseudouridine-5'-phosphate glycosidase family. Homotrimer. The cofactor is Mn(2+).

The catalysed reaction is D-ribose 5-phosphate + uracil = psi-UMP + H2O. Functionally, catalyzes the reversible cleavage of pseudouridine 5'-phosphate (PsiMP) to ribose 5-phosphate and uracil. Functions biologically in the cleavage direction, as part of a pseudouridine degradation pathway. This chain is Pseudouridine-5'-phosphate glycosidase, found in Thermotoga neapolitana (strain ATCC 49049 / DSM 4359 / NBRC 107923 / NS-E).